The following is a 494-amino-acid chain: Rhamnulokinase (494 aa).

18 to 22 lines the ATP pocket; the sequence is ASSGR. Residues Gly87 and 242-244 each bind substrate; that span reads HDT. The active-site Proton acceptor is Asp243. Thr265 contributes to the ATP binding site. Substrate is bound at residue Asn302. ATP is bound at residue Gln310. Cysteines 360 and 377 form a disulfide. Residue Gly411 participates in ATP binding.

Belongs to the rhamnulokinase family. Requires Mg(2+) as cofactor.

The catalysed reaction is L-rhamnulose + ATP = L-rhamnulose 1-phosphate + ADP + H(+). Its pathway is carbohydrate degradation; L-rhamnose degradation; glycerone phosphate from L-rhamnose: step 2/3. In terms of biological role, involved in the catabolism of L-rhamnose (6-deoxy-L-mannose). Catalyzes the transfer of the gamma-phosphate group from ATP to the 1-hydroxyl group of L-rhamnulose to yield L-rhamnulose 1-phosphate. The chain is Rhamnulokinase from Enterococcus faecalis (strain ATCC 700802 / V583).